The sequence spans 139 residues: ATP synthase epsilon chain (139 aa).

The protein belongs to the ATPase epsilon chain family. F-type ATPases have 2 components, CF(1) - the catalytic core - and CF(0) - the membrane proton channel. CF(1) has five subunits: alpha(3), beta(3), gamma(1), delta(1), epsilon(1). CF(0) has three main subunits: a, b and c.

Its subcellular location is the cell inner membrane. In terms of biological role, produces ATP from ADP in the presence of a proton gradient across the membrane. This chain is ATP synthase epsilon chain, found in Marinomonas sp. (strain MWYL1).